The chain runs to 279 residues: 30 kDa ribonucleoprotein, chloroplastic (279 aa).

The 79-residue stretch at 87 to 165 (LKIFVGNLLF…RALRVNSGPP (79 aa)) folds into the RRM 1 domain. The interval 156–187 (RALRVNSGPPPEKRENSSFRENSSFRGGSRGG) is disordered. Residues 166 to 193 (PEKRENSSFRENSSFRGGSRGGGSFDSS) are linker (Gly-rich). An RRM 2 domain is found at 194 to 272 (NRVYVGNLAW…RAIRVSPAEA (79 aa)).

In terms of tissue distribution, expressed at high levels in the leaves and seedlings, and lower levels are seen in the stems and roots.

It is found in the plastid. It localises to the chloroplast. Functionally, could be involved in splicing and/or processing of chloroplast RNA's. The protein is 30 kDa ribonucleoprotein, chloroplastic of Nicotiana plumbaginifolia (Leadwort-leaved tobacco).